Consider the following 184-residue polypeptide: Shikimate kinase (184 aa).

12–17 (GSGKST) contributes to the ATP binding site. Residue Ser16 coordinates Mg(2+). Residues Asp34, Arg58, and Gly80 each contribute to the substrate site. Arg117 is a binding site for ATP. Arg136 contributes to the substrate binding site. An ATP-binding site is contributed by Arg153. The segment at 163–184 (MSRLDDPTPNTSPSSTASGAAT) is disordered. Residues 169-184 (PTPNTSPSSTASGAAT) show a composition bias toward low complexity.

The protein belongs to the shikimate kinase family. As to quaternary structure, monomer. Requires Mg(2+) as cofactor.

It is found in the cytoplasm. The catalysed reaction is shikimate + ATP = 3-phosphoshikimate + ADP + H(+). It participates in metabolic intermediate biosynthesis; chorismate biosynthesis; chorismate from D-erythrose 4-phosphate and phosphoenolpyruvate: step 5/7. Catalyzes the specific phosphorylation of the 3-hydroxyl group of shikimic acid using ATP as a cosubstrate. This Mycobacterium marinum (strain ATCC BAA-535 / M) protein is Shikimate kinase.